Here is a 393-residue protein sequence, read N- to C-terminus: Mitogen-activated protein kinase 10 (393 aa).

In terms of domain architecture, Protein kinase spans 60-345; sequence KPPIRPIGRG…VKEALAHPYL (286 aa). ATP is bound by residues 66-74 and Lys89; that span reads IGRGACGIV. Residue Asp186 is the Proton acceptor of the active site. A Phosphothreonine modification is found at Thr218. Residues 218–220 carry the TXY motif; it reads TEY. Residue Tyr220 is modified to Phosphotyrosine. Phosphothreonine is present on Thr223.

The protein belongs to the protein kinase superfamily. CMGC Ser/Thr protein kinase family. MAP kinase subfamily. As to quaternary structure, interacts with MKK2. Dually phosphorylated on Thr-218 and Tyr-220, which activates the enzyme.

The enzyme catalyses L-seryl-[protein] + ATP = O-phospho-L-seryl-[protein] + ADP + H(+). It catalyses the reaction L-threonyl-[protein] + ATP = O-phospho-L-threonyl-[protein] + ADP + H(+). Its activity is regulated as follows. Activated by threonine and tyrosine phosphorylation. This Arabidopsis thaliana (Mouse-ear cress) protein is Mitogen-activated protein kinase 10 (MPK10).